Here is a 292-residue protein sequence, read N- to C-terminus: Cytidine deaminase (292 aa).

2 CMP/dCMP-type deaminase domains span residues 47-167 (TTLK…FGPK) and 186-292 (DHQD…YYSL). 88 to 90 (NQE) lines the substrate pocket. H101 provides a ligand contact to Zn(2+). Catalysis depends on E103, which acts as the Proton donor. Zn(2+) contacts are provided by C128 and C131.

It belongs to the cytidine and deoxycytidylate deaminase family. As to quaternary structure, homodimer. Zn(2+) is required as a cofactor.

The enzyme catalyses cytidine + H2O + H(+) = uridine + NH4(+). It catalyses the reaction 2'-deoxycytidine + H2O + H(+) = 2'-deoxyuridine + NH4(+). This enzyme scavenges exogenous and endogenous cytidine and 2'-deoxycytidine for UMP synthesis. In Haemophilus influenzae (strain ATCC 51907 / DSM 11121 / KW20 / Rd), this protein is Cytidine deaminase.